The chain runs to 331 residues: tRNA N6-adenosine threonylcarbamoyltransferase (331 aa).

Fe cation contacts are provided by His-109, His-113, and Tyr-130. Substrate contacts are provided by residues 130–134, Asp-162, Asp-183, and Ser-262; that span reads YLSGG. Fe cation is bound at residue Asp-290.

Belongs to the KAE1 / TsaD family. Requires Fe(2+) as cofactor.

Its subcellular location is the cytoplasm. The enzyme catalyses L-threonylcarbamoyladenylate + adenosine(37) in tRNA = N(6)-L-threonylcarbamoyladenosine(37) in tRNA + AMP + H(+). In terms of biological role, required for the formation of a threonylcarbamoyl group on adenosine at position 37 (t(6)A37) in tRNAs that read codons beginning with adenine. Is probably involved in the transfer of the threonylcarbamoyl moiety of threonylcarbamoyl-AMP (TC-AMP) to the N6 group of A37. The chain is tRNA N6-adenosine threonylcarbamoyltransferase from Metallosphaera sedula (strain ATCC 51363 / DSM 5348 / JCM 9185 / NBRC 15509 / TH2).